Consider the following 380-residue polypeptide: Glucose-1-phosphate adenylyltransferase (380 aa).

Alpha-D-glucose 1-phosphate is bound by residues tyrosine 99, glycine 164, 179–180, and serine 190; that span reads EK.

This sequence belongs to the bacterial/plant glucose-1-phosphate adenylyltransferase family. In terms of assembly, homotetramer.

The enzyme catalyses alpha-D-glucose 1-phosphate + ATP + H(+) = ADP-alpha-D-glucose + diphosphate. It participates in glycan biosynthesis; glycogen biosynthesis. Its function is as follows. Involved in the biosynthesis of ADP-glucose, a building block required for the elongation reactions to produce glycogen. Catalyzes the reaction between ATP and alpha-D-glucose 1-phosphate (G1P) to produce pyrophosphate and ADP-Glc. The chain is Glucose-1-phosphate adenylyltransferase from Bacillus subtilis (strain 168).